Consider the following 312-residue polypeptide: Light-independent protochlorophyllide reductase iron-sulfur ATP-binding protein (312 aa).

ATP contacts are provided by residues 55-60 (GIGKST) and lysine 84. Serine 59 is a binding site for Mg(2+). [4Fe-4S] cluster contacts are provided by cysteine 140 and cysteine 174. Residues 225 to 226 (NR) and 249 to 251 (PDL) contribute to the ATP site.

Belongs to the NifH/BchL/ChlL family. Homodimer. Protochlorophyllide reductase is composed of three subunits; BchL, BchN and BchB. Requires [4Fe-4S] cluster as cofactor.

The catalysed reaction is chlorophyllide a + oxidized 2[4Fe-4S]-[ferredoxin] + 2 ADP + 2 phosphate = protochlorophyllide a + reduced 2[4Fe-4S]-[ferredoxin] + 2 ATP + 2 H2O. The protein operates within porphyrin-containing compound metabolism; bacteriochlorophyll biosynthesis (light-independent). Component of the dark-operative protochlorophyllide reductase (DPOR) that uses Mg-ATP and reduced ferredoxin to reduce ring D of protochlorophyllide (Pchlide) to form chlorophyllide a (Chlide). This reaction is light-independent. The L component serves as a unique electron donor to the NB-component of the complex, and binds Mg-ATP. In Rhodopseudomonas palustris (strain HaA2), this protein is Light-independent protochlorophyllide reductase iron-sulfur ATP-binding protein.